The chain runs to 338 residues: Biotin synthase (338 aa).

One can recognise a Radical SAM core domain in the interval 46–270 (NEVQLSTLLS…VAVARITMPA (225 aa)). Positions 61, 65, and 68 each coordinate [4Fe-4S] cluster. The [2Fe-2S] cluster site is built by C105, C136, C196, and R274.

Belongs to the radical SAM superfamily. Biotin synthase family. Homodimer. [4Fe-4S] cluster serves as cofactor. Requires [2Fe-2S] cluster as cofactor.

It carries out the reaction (4R,5S)-dethiobiotin + (sulfur carrier)-SH + 2 reduced [2Fe-2S]-[ferredoxin] + 2 S-adenosyl-L-methionine = (sulfur carrier)-H + biotin + 2 5'-deoxyadenosine + 2 L-methionine + 2 oxidized [2Fe-2S]-[ferredoxin]. It participates in cofactor biosynthesis; biotin biosynthesis; biotin from 7,8-diaminononanoate: step 2/2. Catalyzes the conversion of dethiobiotin (DTB) to biotin by the insertion of a sulfur atom into dethiobiotin via a radical-based mechanism. In Rhizorhabdus wittichii (strain DSM 6014 / CCUG 31198 / JCM 15750 / NBRC 105917 / EY 4224 / RW1) (Sphingomonas wittichii), this protein is Biotin synthase.